Reading from the N-terminus, the 579-residue chain is Adenine deaminase (579 aa).

Belongs to the metallo-dependent hydrolases superfamily. Adenine deaminase family. Mn(2+) serves as cofactor.

The enzyme catalyses adenine + H2O + H(+) = hypoxanthine + NH4(+). In Listeria welshimeri serovar 6b (strain ATCC 35897 / DSM 20650 / CCUG 15529 / CIP 8149 / NCTC 11857 / SLCC 5334 / V8), this protein is Adenine deaminase.